The following is a 426-amino-acid chain: Serine--tRNA ligase (426 aa).

233 to 235 (TAE) serves as a coordination point for L-serine. 264 to 266 (RSE) contacts ATP. Glu-287 lines the L-serine pocket. 351 to 354 (EISS) contributes to the ATP binding site. Ser-387 lines the L-serine pocket.

This sequence belongs to the class-II aminoacyl-tRNA synthetase family. Type-1 seryl-tRNA synthetase subfamily. Homodimer. The tRNA molecule binds across the dimer.

Its subcellular location is the cytoplasm. It catalyses the reaction tRNA(Ser) + L-serine + ATP = L-seryl-tRNA(Ser) + AMP + diphosphate + H(+). The catalysed reaction is tRNA(Sec) + L-serine + ATP = L-seryl-tRNA(Sec) + AMP + diphosphate + H(+). The protein operates within aminoacyl-tRNA biosynthesis; selenocysteinyl-tRNA(Sec) biosynthesis; L-seryl-tRNA(Sec) from L-serine and tRNA(Sec): step 1/1. In terms of biological role, catalyzes the attachment of serine to tRNA(Ser). Is also able to aminoacylate tRNA(Sec) with serine, to form the misacylated tRNA L-seryl-tRNA(Sec), which will be further converted into selenocysteinyl-tRNA(Sec). In Pseudomonas fluorescens (strain Pf0-1), this protein is Serine--tRNA ligase.